A 386-amino-acid polypeptide reads, in one-letter code: Glyceraldehyde-3-phosphate dehydrogenase, chloroplastic (386 aa).

Residues M1–T45 constitute a chloroplast transit peptide. NADP(+) contacts are provided by residues R58–I59 and R125. D-glyceraldehyde 3-phosphate contacts are provided by residues S197–T199, T228, T257–G258, and R280. C198 acts as the Nucleophile in catalysis. N362 lines the NADP(+) pocket.

This sequence belongs to the glyceraldehyde-3-phosphate dehydrogenase family. In terms of assembly, homotetramer.

It localises to the plastid. The protein localises to the chloroplast. The catalysed reaction is D-glyceraldehyde 3-phosphate + phosphate + NADP(+) = (2R)-3-phospho-glyceroyl phosphate + NADPH + H(+). It catalyses the reaction D-glyceraldehyde 3-phosphate + phosphate + NAD(+) = (2R)-3-phospho-glyceroyl phosphate + NADH + H(+). It functions in the pathway carbohydrate biosynthesis; Calvin cycle. The protein is Glyceraldehyde-3-phosphate dehydrogenase, chloroplastic (GAPC1) of Guillardia theta (Cryptophyte).